Consider the following 196-residue polypeptide: Large ribosomal subunit protein uL18 (196 aa).

It belongs to the universal ribosomal protein uL18 family. Part of the 50S ribosomal subunit. Contacts the 5S and 23S rRNAs.

Its function is as follows. This is one of the proteins that bind and probably mediate the attachment of the 5S RNA into the large ribosomal subunit, where it forms part of the central protuberance. This Desulfurococcus amylolyticus (strain DSM 18924 / JCM 16383 / VKM B-2413 / 1221n) (Desulfurococcus kamchatkensis) protein is Large ribosomal subunit protein uL18.